A 341-amino-acid chain; its full sequence is tRNA N6-adenosine threonylcarbamoyltransferase (341 aa).

His-110 and His-114 together coordinate Fe cation. Residues 133–137, Asp-166, Gly-179, and Asn-276 each bind substrate; that span reads LVSGG. A Fe cation-binding site is contributed by Asp-304.

The protein belongs to the KAE1 / TsaD family. The cofactor is Fe(2+).

It localises to the cytoplasm. The enzyme catalyses L-threonylcarbamoyladenylate + adenosine(37) in tRNA = N(6)-L-threonylcarbamoyladenosine(37) in tRNA + AMP + H(+). Its function is as follows. Required for the formation of a threonylcarbamoyl group on adenosine at position 37 (t(6)A37) in tRNAs that read codons beginning with adenine. Is involved in the transfer of the threonylcarbamoyl moiety of threonylcarbamoyl-AMP (TC-AMP) to the N6 group of A37, together with TsaE and TsaB. TsaD likely plays a direct catalytic role in this reaction. In Saccharophagus degradans (strain 2-40 / ATCC 43961 / DSM 17024), this protein is tRNA N6-adenosine threonylcarbamoyltransferase.